The sequence spans 633 residues: Uracil permease (633 aa).

A run of 12 helical transmembrane segments spans residues 143 to 163 (WWQCWITIWIGYGFVGAFVVL), 173 to 193 (LSFPISSRASFGIFFSLWPVI), 197 to 217 (VMAIVWYSVQAYIAATPVSLM), 242 to 262 (YEFMCFFIFWAASLPFLLVPP), 268 to 288 (LFTVKAVLVPFASFGFLIWAI), 310 to 330 (FSWAFLRSLMGCMANFSTMVI), 350 to 370 (LVCIPFLFSITCLIGILVTAA), 400 to 420 (AGVFLISFVFAVAQLGTNISA), 442 to 462 (GSLFCAAMALCICPWNLMATS), 465 to 485 (FTMALSAYAIFLSSIAGVVCS), 521 to 541 (ALAAYLCGVAPCLPGFIAEVG), and 559 to 579 (YWVGYGLSFSSYTALCYFFPV).

The protein belongs to the purine-cytosine permease (2.A.39) family. Glycosylated (possible); but there is not yet direct biochemical evidence for it.

The protein localises to the membrane. In terms of biological role, transport of uracil. The protein is Uracil permease (FUR4) of Saccharomyces cerevisiae (strain ATCC 204508 / S288c) (Baker's yeast).